Here is a 355-residue protein sequence, read N- to C-terminus: D-alanine--D-alanine ligase (355 aa).

The 208-residue stretch at 143 to 350 (KTIFSNHKLP…IEQLVAKLVD (208 aa)) folds into the ATP-grasp domain. 178–233 (LKKLKFPVFVKPSNSGSSLGISKVKNESEILLALEKAWGIDPRILIEEGLEVREIE) is an ATP binding site. 3 residues coordinate Mg(2+): Asp303, Glu317, and Asn319.

This sequence belongs to the D-alanine--D-alanine ligase family. Mg(2+) is required as a cofactor. Mn(2+) serves as cofactor.

The protein resides in the cytoplasm. It carries out the reaction 2 D-alanine + ATP = D-alanyl-D-alanine + ADP + phosphate + H(+). It participates in cell wall biogenesis; peptidoglycan biosynthesis. Its function is as follows. Cell wall formation. This Prochlorococcus marinus (strain MIT 9301) protein is D-alanine--D-alanine ligase.